Reading from the N-terminus, the 336-residue chain is Serpentine receptor class delta-51 (336 aa).

The next 7 helical transmembrane spans lie at 14–34 (VYYS…LFIM), 48–68 (YLFN…FAQC), 93–113 (CFVT…SILL), 133–153 (ATTF…QLLT), 188–208 (AAII…LIAF), 237–257 (GLLI…SYFL), and 275–295 (IFGS…VLPY).

Belongs to the nematode receptor-like protein srd family.

The protein resides in the membrane. The sequence is that of Serpentine receptor class delta-51 (srd-51) from Caenorhabditis elegans.